A 331-amino-acid chain; its full sequence is MSHPTTFNSHLWQQHRLAQQPIEISILLTQMGFAAKVLAREISRAALMGNLGLMGETNATGDAQKKLDVFSNQIVIDAFSNIGLVAVIASEELDQVKLIECGQQAQYILCTDPLDGSSNTDTGSAVGTIFGIYRRQTSGYCSTEADVLQPGTELVTAGYVLYGTSTMLVYTTGGRVDGFTLDPSLGEFLLSHENIRCPETGKTYSANLSYYQEWHPHIQNFADYLSDRKSHTAHTLRYSGALVADVHRCLLEGGLYFYPPTADQPEGKLRLLYECAPLAFLVEQAGGKATSGLARIMDLEVTSIHQRSPLVIGSQVAVNLYQTFLEQGKAA.

The Mg(2+) site is built by E91, D112, L114, and D115. Residues 115 to 118 (DGSS), N207, Y238, and K268 each bind substrate. E274 contacts Mg(2+).

This sequence belongs to the FBPase class 1 family. As to quaternary structure, homotetramer. It depends on Mg(2+) as a cofactor.

The protein localises to the cytoplasm. It catalyses the reaction beta-D-fructose 1,6-bisphosphate + H2O = beta-D-fructose 6-phosphate + phosphate. The protein operates within carbohydrate biosynthesis; Calvin cycle. The polypeptide is Fructose-1,6-bisphosphatase class 1 2 (Acaryochloris marina (strain MBIC 11017)).